The following is a 268-amino-acid chain: GTP cyclohydrolase FolE2 (268 aa).

The protein belongs to the GTP cyclohydrolase IV family.

It carries out the reaction GTP + H2O = 7,8-dihydroneopterin 3'-triphosphate + formate + H(+). The protein operates within cofactor biosynthesis; 7,8-dihydroneopterin triphosphate biosynthesis; 7,8-dihydroneopterin triphosphate from GTP: step 1/1. Converts GTP to 7,8-dihydroneopterin triphosphate. This Paraburkholderia phymatum (strain DSM 17167 / CIP 108236 / LMG 21445 / STM815) (Burkholderia phymatum) protein is GTP cyclohydrolase FolE2.